Consider the following 296-residue polypeptide: Cytidine deaminase (296 aa).

CMP/dCMP-type deaminase domains lie at 52–167 and 191–296; these read SPVE…YLPD and QGHD…YISL. Residue 93-95 coordinates substrate; sequence NQE. Residue H106 coordinates Zn(2+). E108 acts as the Proton donor in catalysis. Zn(2+)-binding residues include C133 and C136.

The protein belongs to the cytidine and deoxycytidylate deaminase family. Homodimer. Zn(2+) is required as a cofactor.

It carries out the reaction cytidine + H2O + H(+) = uridine + NH4(+). It catalyses the reaction 2'-deoxycytidine + H2O + H(+) = 2'-deoxyuridine + NH4(+). Functionally, this enzyme scavenges exogenous and endogenous cytidine and 2'-deoxycytidine for UMP synthesis. This chain is Cytidine deaminase, found in Mannheimia succiniciproducens (strain KCTC 0769BP / MBEL55E).